The primary structure comprises 172 residues: Ribosome maturation factor RimM (172 aa).

The PRC barrel domain occupies 96–168; the sequence is DGEFYYHEII…RIEVELMEGL (73 aa).

The protein belongs to the RimM family. In terms of assembly, binds ribosomal protein uS19.

It localises to the cytoplasm. An accessory protein needed during the final step in the assembly of 30S ribosomal subunit, possibly for assembly of the head region. Essential for efficient processing of 16S rRNA. May be needed both before and after RbfA during the maturation of 16S rRNA. It has affinity for free ribosomal 30S subunits but not for 70S ribosomes. This chain is Ribosome maturation factor RimM, found in Streptococcus thermophilus (strain ATCC BAA-491 / LMD-9).